A 336-amino-acid polypeptide reads, in one-letter code: UPF0324 membrane protein BR0028/BS1330_I0028 (336 aa).

A run of 11 helical transmembrane segments spans residues 9 to 26 (ILPG…AMVL), 36 to 55 (RAWL…VRSL), 68 to 90 (FSAK…ASAV), 94 to 116 (GSGL…YGIG), 128 to 150 (LVAC…VIGA), 160 to 182 (AFTA…LLGL), 189 to 211 (ILAG…VSLL), 221 to 240 (LVRV…ISGN), 247 to 269 (PGFF…LHSL), 279 to 301 (AIQY…GVDI), and 313 to 335 (LTAI…MLGV).

The protein belongs to the UPF0324 family.

It localises to the cell membrane. The polypeptide is UPF0324 membrane protein BR0028/BS1330_I0028 (Brucella suis biovar 1 (strain 1330)).